Consider the following 119-residue polypeptide: Large ribosomal subunit protein uL18 (119 aa).

A disordered region spans residues 1 to 23 (MSQVDKAARRQKIKDRSRVSVQG).

Belongs to the universal ribosomal protein uL18 family. Part of the 50S ribosomal subunit; part of the 5S rRNA/L5/L18/L25 subcomplex. Contacts the 5S and 23S rRNAs.

Its function is as follows. This is one of the proteins that bind and probably mediate the attachment of the 5S RNA into the large ribosomal subunit, where it forms part of the central protuberance. The chain is Large ribosomal subunit protein uL18 from Chlorobium chlorochromatii (strain CaD3).